The primary structure comprises 799 residues: Sodium- and chloride-dependent glycine transporter 2 (799 aa).

Positions Met1–Phe64 are disordered. Over Met1 to Asp201 the chain is Cytoplasmic. Over residues Pro40–Ala57 the composition is skewed to low complexity. At Ser58 the chain carries Phosphoserine. At Thr59 the chain carries Phosphothreonine. Phosphoserine is present on Ser86. 3 consecutive transmembrane segments (helical) span residues Phe202–Leu222, Ala230–Leu249, and Gly273–Ile293. Gly208, Ala210, Val211, and Asn215 together coordinate Na(+). At Cys294–Arg395 the chain is on the extracellular side. An intrachain disulfide couples Cys313 to Cys322. Residues Asn345, Asn355, Asn360, and Asn366 are each glycosylated (N-linked (GlcNAc...) asparagine). 5 consecutive transmembrane segments (helical) span residues Trp396–Ala414, Val423–Ile440, Ile476–Tyr493, Leu505–Ile526, and Leu559–Leu578. Positions 479, 511, 576, and 579 each coordinate Na(+). A run of 4 helical transmembrane segments spans residues Val606–Thr624, Ser640–Leu660, Val681–Tyr700, and Leu719–Ile737. Residues Lys738–Cys799 are Cytoplasmic-facing.

Belongs to the sodium:neurotransmitter symporter (SNF) (TC 2.A.22) family. SLC6A5 subfamily. N-glycosylated. As to expression, specifically expressed in spinal cord, brain stem, and to a lesser extent in the cerebellum.

It is found in the cell membrane. The enzyme catalyses glycine(out) + chloride(out) + 3 Na(+)(out) = glycine(in) + chloride(in) + 3 Na(+)(in). Its function is as follows. Sodium- and chloride-dependent glycine transporter. Terminates the action of glycine by its high affinity sodium-dependent reuptake into presynaptic terminals. May be responsible for the termination of neurotransmission at strychnine-sensitive glycinergic synapses. In Rattus norvegicus (Rat), this protein is Sodium- and chloride-dependent glycine transporter 2 (Slc6a5).